The primary structure comprises 194 residues: 7-methyl-GTP pyrophosphatase (194 aa).

The active-site Proton acceptor is D69.

It belongs to the Maf family. YceF subfamily. A divalent metal cation is required as a cofactor.

The protein localises to the cytoplasm. It catalyses the reaction N(7)-methyl-GTP + H2O = N(7)-methyl-GMP + diphosphate + H(+). Functionally, nucleoside triphosphate pyrophosphatase that hydrolyzes 7-methyl-GTP (m(7)GTP). May have a dual role in cell division arrest and in preventing the incorporation of modified nucleotides into cellular nucleic acids. In Sodalis glossinidius (strain morsitans), this protein is 7-methyl-GTP pyrophosphatase.